A 415-amino-acid polypeptide reads, in one-letter code: Gamma-glutamyl phosphate reductase (415 aa).

The protein belongs to the gamma-glutamyl phosphate reductase family.

The protein resides in the cytoplasm. The enzyme catalyses L-glutamate 5-semialdehyde + phosphate + NADP(+) = L-glutamyl 5-phosphate + NADPH + H(+). Its pathway is amino-acid biosynthesis; L-proline biosynthesis; L-glutamate 5-semialdehyde from L-glutamate: step 2/2. Catalyzes the NADPH-dependent reduction of L-glutamate 5-phosphate into L-glutamate 5-semialdehyde and phosphate. The product spontaneously undergoes cyclization to form 1-pyrroline-5-carboxylate. The protein is Gamma-glutamyl phosphate reductase of Bacillus cereus (strain AH187).